The sequence spans 100 residues: Apolipoprotein C-II (100 aa).

The N-terminal stretch at 1–22 (MGSRFLLALFLVLLVLGYEVQG) is a signal peptide. The lipid binding stretch occupies residues 66–74 (SVDEKLRDM). Residues 78-100 (SSAAVSTYAGIFTDQILTLLKGE) form a lipoprotein lipase cofactor region.

Belongs to the apolipoprotein C2 family. In terms of processing, proapolipoprotein C-II is synthesized as a sialic acid containing glycoprotein which is subsequently desialylated prior to its proteolytic processing. Post-translationally, proapolipoprotein C-II, the major form found in plasma undergoes proteolytic cleavage of its N-terminal hexapeptide to generate the mature form apolipoprotein C-II, which occurs as the minor form in plasma.

The protein localises to the secreted. Its function is as follows. Component of chylomicrons, very low-density lipoproteins (VLDL), low-density lipoproteins (LDL), and high-density lipoproteins (HDL) in plasma. Plays an important role in lipoprotein metabolism as an activator of lipoprotein lipase. In Neotoma lepida (Desert woodrat), this protein is Apolipoprotein C-II (Apoc2).